Consider the following 180-residue polypeptide: Flavodoxin B (180 aa).

Residues 4 to 173 (IGLFFGSNTG…RVAAWLAQIA (170 aa)) enclose the Flavodoxin-like domain.

It belongs to the flavodoxin family. The cofactor is FMN.

Low-potential electron donor to a number of redox enzymes. NifF is the electron donor to nitrogenase. The chain is Flavodoxin B (nifF) from Azotobacter chroococcum mcd 1.